We begin with the raw amino-acid sequence, 901 residues long: Cyanophycin synthetase (901 aa).

The ATP-grasp domain occupies 224–478; it reads KRILAASGVP…VAGAVMDMLF (255 aa). Position 493 to 499 (493 to 499) interacts with ATP; it reads GTNGKTT.

It in the C-terminal section; belongs to the MurCDEF family. As to quaternary structure, homodimer.

The catalysed reaction is [L-4-(L-arginin-2-N-yl)aspartate](n) + L-aspartate + ATP = [L-4-(L-arginin-2-N-yl)aspartate](n)-L-aspartate + ADP + phosphate + H(+). It catalyses the reaction [L-4-(L-arginin-2-N-yl)aspartate](n)-L-aspartate + L-arginine + ATP = [L-4-(L-arginin-2-N-yl)aspartate](n+1) + ADP + phosphate + H(+). Catalyzes the ATP-dependent polymerization of arginine and aspartate to multi-L-arginyl-poly-L-aspartic acid (cyanophycin; a water-insoluble reserve polymer). In Trichormus variabilis (strain ATCC 29413 / PCC 7937) (Anabaena variabilis), this protein is Cyanophycin synthetase (cphA).